The chain runs to 308 residues: Probable plastid-lipid-associated protein 9, chloroplastic (308 aa).

A chloroplast-targeting transit peptide spans 1–55 (MALIQHGSVSGTSAVRLSFSSSVSPPSSSPPLSRVSLNFQSEKKSCYRRMICRAM).

Belongs to the PAP/fibrillin family.

It is found in the plastid. The protein resides in the chloroplast. It localises to the plastoglobule. The polypeptide is Probable plastid-lipid-associated protein 9, chloroplastic (PAP9) (Arabidopsis thaliana (Mouse-ear cress)).